The primary structure comprises 115 residues: Nucleoid-associated protein PMN2A_1347 (115 aa).

The disordered stretch occupies residues 89-115 (STSTMKERMEDLTGGFKLNLPGMGEEN).

Belongs to the YbaB/EbfC family. Homodimer.

It is found in the cytoplasm. The protein resides in the nucleoid. Binds to DNA and alters its conformation. May be involved in regulation of gene expression, nucleoid organization and DNA protection. In Prochlorococcus marinus (strain NATL2A), this protein is Nucleoid-associated protein PMN2A_1347.